An 89-amino-acid polypeptide reads, in one-letter code: Large ribosomal subunit protein bL27 (89 aa).

Residues 1 to 20 form a disordered region; that stretch reads MAHKKAGGSSRNGRDSAGRR.

It belongs to the bacterial ribosomal protein bL27 family.

The sequence is that of Large ribosomal subunit protein bL27 from Zymomonas mobilis subsp. mobilis (strain ATCC 31821 / ZM4 / CP4).